A 119-amino-acid chain; its full sequence is Large ribosomal subunit protein uL18 (119 aa).

Residues 54-76 (LTSASTLADDVEGETPTEESRSV) are disordered.

It belongs to the universal ribosomal protein uL18 family. As to quaternary structure, part of the 50S ribosomal subunit; part of the 5S rRNA/L5/L18/L25 subcomplex. Contacts the 5S and 23S rRNAs.

This is one of the proteins that bind and probably mediate the attachment of the 5S RNA into the large ribosomal subunit, where it forms part of the central protuberance. This chain is Large ribosomal subunit protein uL18, found in Salinibacter ruber (strain DSM 13855 / M31).